A 499-amino-acid chain; its full sequence is Cytochrome P450 monooxygenase ausI (499 aa).

The chain crosses the membrane as a helical span at residues proline 10 to tyrosine 30. Cysteine 439 serves as a coordination point for heme. Asparagine 483 is a glycosylation site (N-linked (GlcNAc...) asparagine).

Belongs to the cytochrome P450 family. It depends on heme as a cofactor.

It localises to the membrane. It functions in the pathway secondary metabolite biosynthesis; terpenoid biosynthesis. Its function is as follows. Cytochrome P450 monooxygenase; part of the gene cluster B that mediates the biosynthesis of austinol and dehydroaustinol, two fungal meroterpenoids. The first step of the pathway is the synthesis of 3,5-dimethylorsellinic acid by the polyketide synthase ausA. 3,5-dimethylorsellinic acid is then prenylated by the polyprenyl transferase ausN. Further epoxidation by the FAD-dependent monooxygenase ausM and cyclization by the probable terpene cyclase ausL lead to the formation of protoaustinoid A. Protoaustinoid A is then oxidized to spiro-lactone preaustinoid A3 by the combined action of the FAD-binding monooxygenases ausB and ausC, and the dioxygenase ausE. Acid-catalyzed keto-rearrangement and ring contraction of the tetraketide portion of preaustinoid A3 by ausJ lead to the formation of preaustinoid A4. The aldo-keto reductase ausK, with the help of ausH, is involved in the next step by transforming preaustinoid A4 into isoaustinone which is in turn hydroxylated by the P450 monooxygenase ausI to form austinolide. Finally, the cytochrome P450 monooxygenase ausG modifies austinolide to austinol. Austinol can be further modified to dehydroaustinol which forms a diffusible complex with diorcinol that initiates conidiation. Due to genetic rearrangements of the clusters and the subsequent loss of some enzymes, the end products of the Emericella nidulans austinoid biosynthesis clusters are austinol and dehydroaustinol, even if additional enzymes, such as the O-acetyltransferase ausQ and the cytochrome P450 monooxygenase ausR are still functional. The protein is Cytochrome P450 monooxygenase ausI of Emericella nidulans (strain FGSC A4 / ATCC 38163 / CBS 112.46 / NRRL 194 / M139) (Aspergillus nidulans).